A 131-amino-acid chain; its full sequence is Small ribosomal subunit protein uS8 (131 aa).

This sequence belongs to the universal ribosomal protein uS8 family. As to quaternary structure, part of the 30S ribosomal subunit. Contacts proteins S5 and S12.

Functionally, one of the primary rRNA binding proteins, it binds directly to 16S rRNA central domain where it helps coordinate assembly of the platform of the 30S subunit. This is Small ribosomal subunit protein uS8 from Nitrosomonas europaea (strain ATCC 19718 / CIP 103999 / KCTC 2705 / NBRC 14298).